Here is a 131-residue protein sequence, read N- to C-terminus: Serum amyloid A-3 protein (131 aa).

Positions 1-18 are cleaved as a signal peptide; it reads MNLSTGIIFCFLILGVSS. Basic and acidic residues predominate over residues 94 to 105; that stretch reads MTRDQVREDSKA. Positions 94-131 are disordered; sequence MTRDQVREDSKADQFANEWGRSGKDPNHFRPAGLPDKY.

Belongs to the SAA family. As to expression, expressed in the liver. Expressed in mammary epithelial cells. Expressed at high levels in mammary ductal cells and vesicle engorged alveoli, but absent from stromal and connective tissue and leukocytes. Secreted into colostrum and mastitic milk (at protein level). Low expression levels, if any, in normal milk (at protein level).

Its subcellular location is the secreted. Its function is as follows. Major acute phase reactant. Apolipoprotein of the HDL complex. May have a role in protection of the mammary gland during remodeling and infection. In vitro exhibits antimicrobial activity against Escherichia coli, Streptococcus uberis and Pseudomonas aeruginosa. In Bos taurus (Bovine), this protein is Serum amyloid A-3 protein (SAA3).